The primary structure comprises 950 residues: Serine/threonine-protein kinase atg1 (950 aa).

A Protein kinase domain is found at 6 to 311; sequence YTRLDEIGRG…FPDFFENGVI (306 aa). Residues 12–20 and Lys-35 contribute to the ATP site; that span reads IGRGSFATV. The Proton acceptor role is filled by Asp-149. Disordered stretches follow at residues 314-425, 443-467, 505-570, 671-690, and 926-950; these read PIPG…HATA, RQRG…LREE, QGGI…QSPT, VQTD…NPDS, and PTPS…TPPK. 3 stretches are compositionally biased toward polar residues: residues 370–389, 447–458, and 511–520; these read GLTQ…PTTT, RNTFSEGSPQTD, and GAQTGALSRR. Residues 549–565 show a composition bias toward basic and acidic residues; the sequence is SRADSMHNRQSSYERRY.

Belongs to the protein kinase superfamily. Ser/Thr protein kinase family. APG1/unc-51/ULK1 subfamily. As to quaternary structure, homodimer. Forms a ternary complex with ATG13 and ATG17.

The protein resides in the cytoplasm. It is found in the preautophagosomal structure membrane. The enzyme catalyses L-seryl-[protein] + ATP = O-phospho-L-seryl-[protein] + ADP + H(+). The catalysed reaction is L-threonyl-[protein] + ATP = O-phospho-L-threonyl-[protein] + ADP + H(+). Serine/threonine protein kinase involved in the cytoplasm to vacuole transport (Cvt) and found to be essential in autophagy, where it is required for the formation of autophagosomes. Involved in the clearance of protein aggregates which cannot be efficiently cleared by the proteasome. Required for selective autophagic degradation of the nucleus (nucleophagy) as well as for mitophagy which contributes to regulate mitochondrial quantity and quality by eliminating the mitochondria to a basal level to fulfill cellular energy requirements and preventing excess ROS production. Also involved in endoplasmic reticulum-specific autophagic process, in selective removal of ER-associated degradation (ERAD) substrates. Plays a key role in ATG9 and ATG23 cycling through the pre-autophagosomal structure and is necessary to promote ATG18 binding to ATG9 through phosphorylation of ATG9. Catalyzes phosphorylation of ATG4, decreasing the interaction between ATG4 and ATG8 and impairing deconjugation of PE-conjugated forms of ATG8. The sequence is that of Serine/threonine-protein kinase atg1 from Neosartorya fischeri (strain ATCC 1020 / DSM 3700 / CBS 544.65 / FGSC A1164 / JCM 1740 / NRRL 181 / WB 181) (Aspergillus fischerianus).